The following is an 85-amino-acid chain: Putative membrane protein insertion efficiency factor (85 aa).

It belongs to the UPF0161 family.

It is found in the cell inner membrane. Its function is as follows. Could be involved in insertion of integral membrane proteins into the membrane. The sequence is that of Putative membrane protein insertion efficiency factor from Vibrio atlanticus (strain LGP32) (Vibrio splendidus (strain Mel32)).